We begin with the raw amino-acid sequence, 459 residues long: Transmembrane protein 143 (459 aa).

The next 2 membrane-spanning stretches (helical) occupy residues Leu-280–Val-300 and Leu-301–Leu-321. Ser-332 bears the Phosphoserine mark. The tract at residues Gly-435 to Ser-459 is disordered. A compositionally biased stretch (polar residues) spans Glu-448–Ser-459.

It is found in the membrane. In Homo sapiens (Human), this protein is Transmembrane protein 143 (TMEM143).